The primary structure comprises 349 residues: Core protein VP7 (349 aa).

Asn287 carries N-linked (GlcNAc...) asparagine; by host glycosylation.

It belongs to the orbivirus VP7 family. In terms of assembly, homotrimer that assemble in a complex of 260 capsomers on an inner scaffold composed of VP3.

Its subcellular location is the virion. The VP7 protein is one of the five proteins (with VP1, VP3, VP4, and VP6) which form the inner capsid of the virus. This is Core protein VP7 (Segment-7) from Bluetongue virus 1 (isolate Australia) (BTV 1).